The primary structure comprises 209 residues: Neurotrophin-4 (209 aa).

A signal peptide spans 1–21 (MLPRHSCSLLLFLLLLPSVPM). The propeptide occupies 22–79 (EPQPPSSTLPPFLAPEWDLLSPRVALSRGTPAGPPLLFLLEAGAYGEPAGAPANRSRR). N75 carries N-linked (GlcNAc...) asparagine glycosylation. 3 disulfides stabilise this stretch: C96-C169, C140-C198, and C157-C200.

This sequence belongs to the NGF-beta family. In terms of tissue distribution, expressed in thymus, muscle, ovary, brain, heart, stomach and kidney. Expressed in both embryo and adult tissues.

The protein localises to the secreted. Its function is as follows. Target-derived survival factor for peripheral sensory sympathetic neurons. May promote ameloblast differentiation and subsequent reduction in proliferation of ameloblasts. In Rattus norvegicus (Rat), this protein is Neurotrophin-4 (Ntf4).